A 94-amino-acid polypeptide reads, in one-letter code: HssA/B-like protein 51 (94 aa).

Residues 1-25 are disordered; sequence MTLFSSISSISNPMTNSKSRISSFG.

Belongs to the hssA/B family.

This chain is HssA/B-like protein 51 (hssl51), found in Dictyostelium discoideum (Social amoeba).